A 237-amino-acid chain; its full sequence is Pyrimidine 5'-nucleotidase PynA (237 aa).

The active-site Nucleophile is Asp9. Mg(2+) contacts are provided by Asp9, Asp11, and Asp181. Catalysis depends on Asp11, which acts as the Proton donor.

This sequence belongs to the HAD-like hydrolase superfamily. YjjG family. In terms of assembly, homodimer. Mg(2+) serves as cofactor. The cofactor is Mn(2+).

The protein resides in the cytoplasm. The catalysed reaction is a ribonucleoside 5'-phosphate + H2O = a ribonucleoside + phosphate. In terms of biological role, nucleotidase that shows high phosphatase activity toward non-canonical pyrimidine nucleotides and three canonical nucleoside 5'-monophosphates (UMP, dUMP and dTMP), and no activity against IMP, UDP, GMP, AMP, UTP or pNPP. Appears to function as a house-cleaning nucleotidase in vivo, since the general nucleotidase activity of it allows it to protect cells against non-canonical pyrimidine derivatives such as 5-fluoro-2'-deoxyuridine monophosphate (5-FdUMP), and prevents the incorporation of potentially mutagenic nucleotides such as 5-bromo-2'-deoxyuridine (5-BrdU) into DNA. Is strictly specific to pyrimidine substrates with 5'-monophosphates and shows no activity against nucleoside di- and triphosphates. This chain is Pyrimidine 5'-nucleotidase PynA, found in Streptococcus pneumoniae (strain ATCC BAA-255 / R6).